The following is a 339-amino-acid chain: Anthranilate phosphoribosyltransferase (339 aa).

5-phospho-alpha-D-ribose 1-diphosphate contacts are provided by residues G80, 83–84, T88, 90–93, 108–116, and S120; these read GD, NIST, and KHGNRAVSS. Position 80 (G80) interacts with anthranilate. Mg(2+) is bound at residue S92. N111 provides a ligand contact to anthranilate. R166 is a binding site for anthranilate. Mg(2+)-binding residues include D225 and E226.

It belongs to the anthranilate phosphoribosyltransferase family. Homodimer. Mg(2+) serves as cofactor.

The enzyme catalyses N-(5-phospho-beta-D-ribosyl)anthranilate + diphosphate = 5-phospho-alpha-D-ribose 1-diphosphate + anthranilate. The protein operates within amino-acid biosynthesis; L-tryptophan biosynthesis; L-tryptophan from chorismate: step 2/5. Catalyzes the transfer of the phosphoribosyl group of 5-phosphorylribose-1-pyrophosphate (PRPP) to anthranilate to yield N-(5'-phosphoribosyl)-anthranilate (PRA). The chain is Anthranilate phosphoribosyltransferase from Caldanaerobacter subterraneus subsp. tengcongensis (strain DSM 15242 / JCM 11007 / NBRC 100824 / MB4) (Thermoanaerobacter tengcongensis).